The sequence spans 436 residues: MEPYDDGFIEEQEEQEEERTEEKVINEEYKTWKKNAPFLYDMILSTALEWPTLTTQWLPDKQEVPDKPYSTHRLLLGTHTSSDAQNYLQIAHVQLPNPSAPNPDDYDEERGEIGGYGGSSKKAPMEIKFNIVQKIDHKGEVNKARYQPQNPNVIATMCTDGRVMIWDRSKHPSLPTGTVNPQMELLGHTKEGFGLSWSPHTAGHLVTGSEDKTVRLWDLTTYTKGNKALKPSRTYTHHSSIVNDVQYHPLHSSLIGTVSDDITLQILDIREAETTRAAASAEGQHRDAINAIAFNPAAETVLATGSADKSIGLWDLRNLKTKLHTLECHTDSVTSLSWHPFEESVLASASYDRKIMFWDLSRSGEEQTPDDAQDGPPELLFMHGGHTNRISDFSWNLNDPWVLCSAAEDNLLQVWKVADAIVGKDLEDVPTEELEA.

Acidic residues predominate over residues 1 to 19; the sequence is MEPYDDGFIEEQEEQEEER. The interval 1-22 is disordered; it reads MEPYDDGFIEEQEEQEEERTEE. 5 WD repeats span residues 136–176, 187–227, 237–277, 284–324, and 328–368; these read DHKG…SLPT, GHTK…KGNK, HHSS…TTRA, QHRD…TKLH, and CHTD…EEQT. The interaction with the histone H4 N-terminus stretch occupies residues 370–374; that stretch reads DDAQD. One copy of the WD 6 repeat lies at 385 to 425; the sequence is GHTNRISDFSWNLNDPWVLCSAAEDNLLQVWKVADAIVGKD.

This sequence belongs to the WD repeat RBAP46/RBAP48/MSI1 family. Component of the HAT-B complex composed of at least hat1 and hat2. The HAT-B complex binds to histone H4 tail.

It is found in the cytoplasm. Its subcellular location is the nucleus. Regulatory subunit of the histone acetylase B (HAT-B) complex. The complex acetylates 'Lys-12' of histone H4 which is required for telomeric silencing. The sequence is that of Histone acetyltransferase type B subunit 2 (hat2) from Aspergillus oryzae (strain ATCC 42149 / RIB 40) (Yellow koji mold).